Here is a 148-residue protein sequence, read N- to C-terminus: Leghemoglobin 3 (148 aa).

The region spanning 2–148 (GFTEKQEALV…LSAAIKKAMS (147 aa)) is the Globin domain. Tyr-30 is subject to Nitrated tyrosine. Ser-45 contacts heme b. Ser-45 bears the Phosphoserine mark. His-63 serves as a coordination point for O2. The heme b site is built by Lys-66, His-95, and Lys-98. Position 136 is a nitrated tyrosine (Tyr-136).

This sequence belongs to the plant globin family. As to quaternary structure, monomer. Nitrated in effective nodules and particularly in hypoxic conditions; this mechanism may play a protective role in the symbiosis by buffering toxic peroxynitrite NO(2)(-). Nitration level decrease during nodule senescence. In terms of processing, phosphorylation at Ser-45 disrupts the molecular environment of its porphyrin ring oxygen binding pocket, thus leading to a reduced oxygen consumption and to the delivery of oxygen O(2) to symbiosomes. Stem nodules.

The protein localises to the cytoplasm. It is found in the cytosol. The protein resides in the nucleus. Functionally, leghemoglobin that reversibly binds oxygen O(2) through a pentacoordinated heme iron. In stem nodules, facilitates the diffusion of oxygen to the bacteroids while preventing the bacterial nitrogenase from being inactivated by buffering dioxygen, nitric oxide and carbon monoxide, and promoting the formation of reactive oxygen species (ROS, e.g. H(2)O(2)). This role is essential for symbiotic nitrogen fixation (SNF). This Sesbania rostrata protein is Leghemoglobin 3.